The chain runs to 239 residues: Uridylate kinase (239 aa).

Lys13 to Gly16 lines the ATP pocket. Gly55 serves as a coordination point for UMP. Residues Gly56 and Arg60 each coordinate ATP. UMP-binding positions include Asp75 and Leu136–Thr143. Positions 163, 169, and 172 each coordinate ATP.

The protein belongs to the UMP kinase family. In terms of assembly, homohexamer.

It is found in the cytoplasm. The enzyme catalyses UMP + ATP = UDP + ADP. The protein operates within pyrimidine metabolism; CTP biosynthesis via de novo pathway; UDP from UMP (UMPK route): step 1/1. Its activity is regulated as follows. Inhibited by UTP. In terms of biological role, catalyzes the reversible phosphorylation of UMP to UDP. The sequence is that of Uridylate kinase from Buchnera aphidicola subsp. Cinara cedri (strain Cc).